A 163-amino-acid polypeptide reads, in one-letter code: Nucleotide-binding protein GK0742 (163 aa).

The protein belongs to the YajQ family.

Nucleotide-binding protein. The chain is Nucleotide-binding protein GK0742 from Geobacillus kaustophilus (strain HTA426).